The following is a 282-amino-acid chain: Acyl-CoA-binding domain-containing protein 6 (282 aa).

The tract at residues 1 to 31 (MASSFLPAGAITGDSGGELSSGDDSGEVEFP) is disordered. An ACB domain is found at 42–127 (LAELFEKAAA…VKKLDPGWNP (86 aa)). Residues 69–73 (YARYK) and Lys-95 each bind an acyl-CoA. The residue at position 106 (Ser-106) is a Phosphoserine. Tyr-114 is a binding site for an acyl-CoA. 2 ANK repeats span residues 191 to 220 (EGRALLHWACDRGHKELVTVLLQHRADINC) and 224 to 253 (EGQTALHYASACEFLDIVELLLQSGADPTL).

As to quaternary structure, monomer. As to expression, detected in placenta and spleen (at protein level). Detected in placenta, umbilical cord blood, CD34-positive hematopoietic progenitor cells and bone marrow.

It is found in the cytoplasm. Its subcellular location is the nucleus. Its function is as follows. Binds long-chain acyl-coenzyme A molecules with a strong preference for unsaturated C18:1-CoA, lower affinity for unsaturated C20:4-CoA, and very weak affinity for saturated C16:0-CoA. Does not bind fatty acids. Plays a role in protein N-myristoylation. The protein is Acyl-CoA-binding domain-containing protein 6 (ACBD6) of Homo sapiens (Human).